The chain runs to 124 residues: Holo-[acyl-carrier-protein] synthase (124 aa).

Residues D8 and E57 each contribute to the Mg(2+) site.

Belongs to the P-Pant transferase superfamily. AcpS family. Mg(2+) is required as a cofactor.

It is found in the cytoplasm. The catalysed reaction is apo-[ACP] + CoA = holo-[ACP] + adenosine 3',5'-bisphosphate + H(+). Functionally, transfers the 4'-phosphopantetheine moiety from coenzyme A to a Ser of acyl-carrier-protein. This chain is Holo-[acyl-carrier-protein] synthase, found in Leptospira borgpetersenii serovar Hardjo-bovis (strain JB197).